We begin with the raw amino-acid sequence, 213 residues long: CASP-like protein 2A1 (213 aa).

The Cytoplasmic portion of the chain corresponds to 1–41 (MSKMAEEKAAAVGGLGGAGAADAAQQQQLAAGEAAAARVRP). The chain crosses the membrane as a helical span at residues 42-62 (VETLLRAAPLGLCVAAMTVML). The Extracellular segment spans residues 63-83 (RNQQSNEYGAVAYSDLGGFKY). The chain crosses the membrane as a helical span at residues 84-104 (LVYANGLCAAYSLVSAFYTAV). At 105–113 (PRPATVSRS) the chain is on the cytoplasmic side. Residues 114–134 (WLVFLLDQVFTYLILAAGAAA) form a helical membrane-spanning segment. The Extracellular portion of the chain corresponds to 135–166 (AELLYLAYNGDKEVTWSEACGVFGSFCRQART). Residues 167-187 (SVAITFGTVLCFILLSLISSY) form a helical membrane-spanning segment. Over 188–213 (RLFSAYEAPPSSALGSKGVEIAAYPR) the chain is Cytoplasmic.

The protein belongs to the Casparian strip membrane proteins (CASP) family. Homodimer and heterodimers.

It localises to the cell membrane. The sequence is that of CASP-like protein 2A1 from Zea mays (Maize).